The following is a 357-amino-acid chain: Intracellular hyaluronan-binding protein 4 (357 aa).

3 disordered regions span residues 56–116, 150–186, and 313–357; these read VVAR…HKTA, ERPRGCGRGRGGMQGRGRGGGINKSFDGFDQRGKREF, and PGCG…PALT. The span at 96–115 shows a compositional bias: basic and acidic residues; it reads PKQEECGGKDNSRAEKEHKT. A compositionally biased stretch (gly residues) spans 155-171; sequence CGRGRGGMQGRGRGGGI. A compositionally biased stretch (basic and acidic residues) spans 176–186; the sequence is DGFDQRGKREF. The span at 348–357 shows a compositional bias: acidic residues; the sequence is DDPEDFPALT.

The protein belongs to the SERBP1-HABP4 family. As to quaternary structure, associates with ribosomes; promoting ribosome stabilization. Interacts with EEF2/eEF2; promoting ribosome stabilization.

Its subcellular location is the nucleus. The protein resides in the cytoplasm. It localises to the stress granule. It is found in the sarcoplasm. The protein localises to the nuclear body. Its subcellular location is the nucleolus. The protein resides in the nucleus speckle. It localises to the cajal body. It is found in the gem. In terms of biological role, ribosome-binding protein that promotes ribosome hibernation, a process during which ribosomes are stabilized in an inactive state and preserved from proteasomal degradation. Acts via its association with EEF2/eEF2 factor at the A-site of the ribosome, promoting ribosome stabilization in an inactive state compatible with storage. Plays a key role in ribosome hibernation in the mature egg by promoting ribosome stabilization. Ribosomes, which are produced in large quantities during oogenesis, are stored and translationally repressed in the egg and early embryo. The polypeptide is Intracellular hyaluronan-binding protein 4 (Gallus gallus (Chicken)).